Consider the following 81-residue polypeptide: Sulfur carrier protein TusA (81 aa).

Residue C19 is the Cysteine persulfide intermediate of the active site.

It belongs to the sulfur carrier protein TusA family.

Its subcellular location is the cytoplasm. Sulfur carrier protein which probably makes part of a sulfur-relay system. This is Sulfur carrier protein TusA from Shewanella sp. (strain ANA-3).